The sequence spans 117 residues: MRNNKTPFLSAIFTASIRGYQRFFSAFTPSSCRFYPTCSNYALWLLCFESPLSAMGKIAIRILSCNPFCSGGIAYPTTRLKRPSLIQSHKDSNRNFKTITFWLVPTKSHATYYIIKV.

It belongs to the UPF0161 family.

The protein resides in the cell inner membrane. Could be involved in insertion of integral membrane proteins into the membrane. This chain is Putative membrane protein insertion efficiency factor, found in Helicobacter pylori (strain ATCC 700392 / 26695) (Campylobacter pylori).